We begin with the raw amino-acid sequence, 206 residues long: Transcriptional regulator GfcR (206 aa).

Belongs to the purine/pyrimidine phosphoribosyltransferase family. GfcR subfamily.

This is Transcriptional regulator GfcR from Methanosphaerula palustris (strain ATCC BAA-1556 / DSM 19958 / E1-9c).